The following is a 346-amino-acid chain: Structure-specific endonuclease subunit SLX1 (346 aa).

Residues 22-105 (DFYGVYLLRS…QHPYQTRHIK (84 aa)) enclose the GIY-YIG domain. The SLX1-type zinc-finger motif lies at 216–306 (CFICNETIDY…TPLQGKCLSC (91 aa)).

This sequence belongs to the SLX1 family. Forms a heterodimer with SLX4. It depends on a divalent metal cation as a cofactor.

Its subcellular location is the nucleus. Catalytic subunit of the SLX1-SLX4 structure-specific endonuclease that resolves DNA secondary structures generated during DNA repair and recombination. Has endonuclease activity towards branched DNA substrates, introducing single-strand cuts in duplex DNA close to junctions with ss-DNA. In Debaryomyces hansenii (strain ATCC 36239 / CBS 767 / BCRC 21394 / JCM 1990 / NBRC 0083 / IGC 2968) (Yeast), this protein is Structure-specific endonuclease subunit SLX1.